The sequence spans 664 residues: Protein-arginine deiminase type-3 (664 aa).

The protein belongs to the protein arginine deiminase family. Requires Ca(2+) as cofactor. Epidermis and hair follicles.

Its subcellular location is the cytoplasm. It carries out the reaction L-arginyl-[protein] + H2O = L-citrullyl-[protein] + NH4(+). In terms of biological role, catalyzes the deimination of arginine residues of proteins. This chain is Protein-arginine deiminase type-3 (Padi3), found in Mus musculus (Mouse).